The chain runs to 409 residues: Arginine biosynthesis bifunctional protein ArgJ (409 aa).

Residues Thr157, Lys183, Thr194, Glu281, Asn404, and Ser409 each contribute to the substrate site. The Nucleophile role is filled by Thr194.

The protein belongs to the ArgJ family. As to quaternary structure, heterotetramer of two alpha and two beta chains.

It is found in the cytoplasm. It carries out the reaction N(2)-acetyl-L-ornithine + L-glutamate = N-acetyl-L-glutamate + L-ornithine. The enzyme catalyses L-glutamate + acetyl-CoA = N-acetyl-L-glutamate + CoA + H(+). Its pathway is amino-acid biosynthesis; L-arginine biosynthesis; L-ornithine and N-acetyl-L-glutamate from L-glutamate and N(2)-acetyl-L-ornithine (cyclic): step 1/1. It functions in the pathway amino-acid biosynthesis; L-arginine biosynthesis; N(2)-acetyl-L-ornithine from L-glutamate: step 1/4. Catalyzes two activities which are involved in the cyclic version of arginine biosynthesis: the synthesis of N-acetylglutamate from glutamate and acetyl-CoA as the acetyl donor, and of ornithine by transacetylation between N(2)-acetylornithine and glutamate. The sequence is that of Arginine biosynthesis bifunctional protein ArgJ from Zymomonas mobilis subsp. mobilis (strain ATCC 31821 / ZM4 / CP4).